Consider the following 358-residue polypeptide: Heat-inducible transcription repressor HrcA (358 aa).

This sequence belongs to the HrcA family.

In terms of biological role, negative regulator of class I heat shock genes (grpE-dnaK-dnaJ and groELS operons). Prevents heat-shock induction of these operons. The sequence is that of Heat-inducible transcription repressor HrcA from Caulobacter vibrioides (strain ATCC 19089 / CIP 103742 / CB 15) (Caulobacter crescentus).